We begin with the raw amino-acid sequence, 644 residues long: Sodium/hydrogen exchanger 9 (644 aa).

Residues 1–20 lie on the Lumenal side of the membrane; the sequence is MAGQLRLTSGKDEDHFQHQG. The chain crosses the membrane as a helical span at residues 21–41; that stretch reads AVELLAFNFLLILTILTIWLF. Over 42 to 45 the chain is Cytoplasmic; sequence KNHR. The chain crosses the membrane as a helical span at residues 46–66; sequence FRFLHETGGAMVYGLIMGLIL. Over 67–126 the chain is Lumenal; that stretch reads RYATAPTDIDSGTVYNCGKLLFSPSTLLVNITDQVYEYKYQREINQHNISPHQGNAILEK. Residues 127–147 traverse the membrane as a helical segment; that stretch reads MTFDPEIFFNVLLPPIIFHAG. The Cytoplasmic portion of the chain corresponds to 148 to 164; that stretch reads YSLKKRHFFQNLGSILT. The helical transmembrane segment at 165–185 threads the bilayer; the sequence is YAFLGTAISCVVIGLIMYGFV. The Lumenal portion of the chain corresponds to 186-203; the sequence is KAMVHAGQLKSGDFHFTD. Residues 204 to 224 traverse the membrane as a helical segment; it reads CLFFGSLMSATDPVTVLAIFH. Residues 225-235 lie on the Cytoplasmic side of the membrane; that stretch reads ELHVDPDLYTL. A helical transmembrane segment spans residues 236-256; the sequence is LFGESVLNDAVAIVLTYSISI. Residues 257–277 lie on the Lumenal side of the membrane; it reads YSPKENPNAFDTAAFFQSVGN. Residues 278-298 form a helical membrane-spanning segment; that stretch reads FLGIFAGSFAMGSAYAVVTAL. At 299–309 the chain is on the cytoplasmic side; sequence LTKFTKLREFP. Residues 310–327 traverse the membrane as a helical segment; it reads MLETGLFFLLSWSAFLSA. The Lumenal portion of the chain corresponds to 328 to 333; the sequence is EAAGLT. The helical transmembrane segment at 334 to 350 threads the bilayer; the sequence is GIVAVLFCGVTQAHYTY. The Cytoplasmic segment spans residues 351–364; sequence NNLSSDSKLRTKQL. Residues 365-385 form a helical membrane-spanning segment; the sequence is FEFMNFLAENVIFCYMGLALF. Thr386 is a topological domain (lumenal). A helical transmembrane segment spans residues 387-407; that stretch reads FQNHIFNALFILGAFLAIFVA. Topologically, residues 408–429 are cytoplasmic; sequence RACNIYPLSFLLNLGRKQKIPW. The chain crosses the membrane as a helical span at residues 430-450; sequence NFQHMMMFSGLRGAIAFALAI. The Lumenal portion of the chain corresponds to 451 to 465; the sequence is RNTESQPKQMMFTTT. A helical membrane pass occupies residues 466–486; that stretch reads LLLVFFTVWVFGGGTTPMLTW. Topologically, residues 487 to 644 are cytoplasmic; the sequence is LQIRVGVDLD…EQTRGQPQMD (158 aa).

Belongs to the monovalent cation:proton antiporter 1 (CPA1) transporter (TC 2.A.36) family. Homodimer; phosphatidylinositol-4,5-bisphosphate (PIP2) and phosphatidylinositol 3,4,5-trisphosphate (PIP3) could be involved in the dimer stabilization. Interacts (via the C-terminus) with RACK1. Interacts with CHP1. Expressed in hair bundles and in vestibular hair bundles. Expressed in brain.

The protein resides in the late endosome membrane. The protein localises to the early endosome membrane. It localises to the recycling endosome membrane. Its subcellular location is the cell membrane. It is found in the cytoplasmic vesicle. The protein resides in the phagosome membrane. The catalysed reaction is Na(+)(in) + H(+)(out) = Na(+)(out) + H(+)(in). It catalyses the reaction K(+)(in) + H(+)(out) = K(+)(out) + H(+)(in). Its function is as follows. Endosomal Na(+), K(+)/H(+) antiporter. Mediates the electroneutral exchange of endosomal luminal H(+) for a cytosolic Na(+) or K(+). By facilitating proton efflux, SLC9A9 counteracts the acidity generated by vacuolar (V)-ATPase, thereby limiting luminal acidification. Regulates organellar pH and consequently, endosome maturation and endocytic trafficking of plasma membrane receptors and neurotransporters. Promotes the recycling of transferrin receptors back to the cell surface to facilitate additional iron uptake in the brain. Regulates synaptic transmission by regulating the luminal pH of axonal endosomes. Regulates phagosome lumenal pH, thus affecting phagosome maturation, and consequently, microbicidal activity in macrophages. Can also be active at the cell surface of specialized cells, e.g., in the inner ear hair bundles uses the high K(+) of the endolymph to regulate intracelular pH. This is Sodium/hydrogen exchanger 9 (Slc9a9) from Rattus norvegicus (Rat).